A 394-amino-acid chain; its full sequence is uncharacterized protein (394 aa).

4 N-linked (GlcNAc...) asparagine glycosylation sites follow: Asn-3, Asn-14, Asn-20, and Asn-25. 6 helical membrane passes run 64–84, 101–121, 133–153, 180–200, 228–248, and 256–276; these read AVGIVTACFCFFLIPLLLVNI, FIWITLLILALAVGGFAYIDV, IFSFTFQTALPISIAIIWHVI, IFVVEYYAPIVFYVFNLMGFF, VLLAIAWVFACAMFIVYSFVY, and WVGMVIMMISILPRIVYQFLE. N-linked (GlcNAc...) asparagine glycans are attached at residues Asn-283 and Asn-286. The helical transmembrane segment at 291–311 threads the bilayer; sequence AGLVFGLGFCPPLILAYTVCI. N-linked (GlcNAc...) asparagine glycosylation occurs at Asn-344.

The protein localises to the membrane. This is an uncharacterized protein from Schizosaccharomyces pombe (strain 972 / ATCC 24843) (Fission yeast).